Here is a 490-residue protein sequence, read N- to C-terminus: Glutamate--tRNA ligase 1 (490 aa).

The short motif at 27 to 37 (PSPTGYLHIGG) is the 'HIGH' region element. Positions 254 to 258 (KLSKR) match the 'KMSKS' region motif. K257 lines the ATP pocket.

This sequence belongs to the class-I aminoacyl-tRNA synthetase family. Glutamate--tRNA ligase type 1 subfamily. Monomer.

The protein resides in the cytoplasm. It carries out the reaction tRNA(Glu) + L-glutamate + ATP = L-glutamyl-tRNA(Glu) + AMP + diphosphate. In terms of biological role, catalyzes the attachment of glutamate to tRNA(Glu) in a two-step reaction: glutamate is first activated by ATP to form Glu-AMP and then transferred to the acceptor end of tRNA(Glu). This Sphingopyxis alaskensis (strain DSM 13593 / LMG 18877 / RB2256) (Sphingomonas alaskensis) protein is Glutamate--tRNA ligase 1.